The sequence spans 293 residues: NAD kinase (293 aa).

The Proton acceptor role is filled by Asp72. NAD(+) contacts are provided by residues 72–73 (DG), 146–147 (ND), Arg157, Arg174, Asp176, 187–192 (TAYALS), and Gln247.

The protein belongs to the NAD kinase family. Requires a divalent metal cation as cofactor.

It localises to the cytoplasm. The enzyme catalyses NAD(+) + ATP = ADP + NADP(+) + H(+). Its function is as follows. Involved in the regulation of the intracellular balance of NAD and NADP, and is a key enzyme in the biosynthesis of NADP. Catalyzes specifically the phosphorylation on 2'-hydroxyl of the adenosine moiety of NAD to yield NADP. In Chromohalobacter salexigens (strain ATCC BAA-138 / DSM 3043 / CIP 106854 / NCIMB 13768 / 1H11), this protein is NAD kinase.